Here is a 533-residue protein sequence, read N- to C-terminus: Glucose-6-phosphate isomerase (533 aa).

The active-site Proton donor is Glu341. Catalysis depends on residues His372 and Lys501.

This sequence belongs to the GPI family.

It localises to the cytoplasm. The catalysed reaction is alpha-D-glucose 6-phosphate = beta-D-fructose 6-phosphate. Its pathway is carbohydrate biosynthesis; gluconeogenesis. It participates in carbohydrate degradation; glycolysis; D-glyceraldehyde 3-phosphate and glycerone phosphate from D-glucose: step 2/4. Its function is as follows. Catalyzes the reversible isomerization of glucose-6-phosphate to fructose-6-phosphate. The chain is Glucose-6-phosphate isomerase from Cereibacter sphaeroides (strain ATCC 17025 / ATH 2.4.3) (Rhodobacter sphaeroides).